The chain runs to 1172 residues: Lysylphosphatidylglycerol biosynthesis bifunctional protein LysX (1172 aa).

Residues 1–34 (MGLHLTVPGLRRDGRGVQSNSHDTSSKTTADISR) form a disordered region. The segment at 1 to 663 (MGLHLTVPGL…LLHHDGSAPD (663 aa)) is phosphatidylglycerol lysyltransferase. The segment covering 17-31 (VQSNSHDTSSKTTAD) has biased composition (polar residues). A run of 7 helical transmembrane segments spans residues 80 to 100 (VPAA…LASV), 122 to 142 (FPDT…ALTA), 146 to 166 (IAWL…AAEI), 177 to 197 (FGEN…VLGY), 214 to 234 (AVWL…VELF), 272 to 292 (AIFG…LFLS), and 612 to 632 (VIPR…LPFS). The lysine--tRNA ligase stretch occupies residues 664–1172 (VSGLRQVGLT…TLPFPLAKPH (509 aa)). Positions 726–804 (VSVSGRIMRI…SLIVSGWRLI (79 aa)) form a DNA-binding region, OB. Residues aspartate 1084 and glutamate 1091 each coordinate Mg(2+).

In the N-terminal section; belongs to the LPG synthetase family. This sequence in the C-terminal section; belongs to the class-II aminoacyl-tRNA synthetase family. Mg(2+) is required as a cofactor.

The protein localises to the cell membrane. It catalyses the reaction tRNA(Lys) + L-lysine + ATP = L-lysyl-tRNA(Lys) + AMP + diphosphate. It carries out the reaction L-lysyl-tRNA(Lys) + a 1,2-diacyl-sn-glycero-3-phospho-(1'-sn-glycerol) = a 1,2-diacyl-sn-glycero-3-phospho-1'-(3'-O-L-lysyl)-sn-glycerol + tRNA(Lys). Functionally, catalyzes the production of L-lysyl-tRNA(Lys)transfer and the transfer of a lysyl group from L-lysyl-tRNA(Lys) to membrane-bound phosphatidylglycerol (PG), which produces lysylphosphatidylglycerol (LPG), one of the components of the bacterial membrane with a positive net charge. LPG synthesis contributes to the resistance to cationic antimicrobial peptides (CAMPs) and likely protects M.tuberculosis against the CAMPs produced by competiting microorganisms (bacteriocins). In fact, the modification of anionic phosphatidylglycerol with positively charged L-lysine results in repulsion of the peptides. The protein is Lysylphosphatidylglycerol biosynthesis bifunctional protein LysX (lysX) of Mycobacterium bovis (strain BCG / Pasteur 1173P2).